Here is a 402-residue protein sequence, read N- to C-terminus: Propionate kinase (402 aa).

Positions 11 and 18 each coordinate ATP. N11 contributes to the Mg(2+) binding site. R86 lines the substrate pocket. D143 (proton donor/acceptor) is an active-site residue. ATP-binding positions include H175, 203–207 (HLGNG), 278–280 (DLR), and 326–330 (GIGEN).

This sequence belongs to the acetokinase family. TdcD subfamily. As to quaternary structure, homodimer. Mg(2+) is required as a cofactor.

It carries out the reaction propanoate + ATP = propanoyl phosphate + ADP. Its pathway is amino-acid degradation; L-threonine degradation via propanoate pathway; propanoate from L-threonine: step 4/4. In terms of biological role, catalyzes the conversion of propionyl phosphate and ADP to propionate and ATP. The sequence is that of Propionate kinase from Edwardsiella piscicida.